A 239-amino-acid chain; its full sequence is Phosphoribosylaminoimidazole-succinocarboxamide synthase (239 aa).

It belongs to the SAICAR synthetase family.

It catalyses the reaction 5-amino-1-(5-phospho-D-ribosyl)imidazole-4-carboxylate + L-aspartate + ATP = (2S)-2-[5-amino-1-(5-phospho-beta-D-ribosyl)imidazole-4-carboxamido]succinate + ADP + phosphate + 2 H(+). Its pathway is purine metabolism; IMP biosynthesis via de novo pathway; 5-amino-1-(5-phospho-D-ribosyl)imidazole-4-carboxamide from 5-amino-1-(5-phospho-D-ribosyl)imidazole-4-carboxylate: step 1/2. This is Phosphoribosylaminoimidazole-succinocarboxamide synthase from Bacillus cereus (strain G9842).